The sequence spans 125 residues: Holo-[acyl-carrier-protein] synthase (125 aa).

The Mg(2+) site is built by aspartate 8 and glutamate 57.

The protein belongs to the P-Pant transferase superfamily. AcpS family. Requires Mg(2+) as cofactor.

It localises to the cytoplasm. It carries out the reaction apo-[ACP] + CoA = holo-[ACP] + adenosine 3',5'-bisphosphate + H(+). Transfers the 4'-phosphopantetheine moiety from coenzyme A to a Ser of acyl-carrier-protein. This chain is Holo-[acyl-carrier-protein] synthase, found in Nitrosomonas europaea (strain ATCC 19718 / CIP 103999 / KCTC 2705 / NBRC 14298).